The sequence spans 103 residues: Large ribosomal subunit protein uL24 (103 aa).

The protein belongs to the universal ribosomal protein uL24 family. Part of the 50S ribosomal subunit.

In terms of biological role, one of two assembly initiator proteins, it binds directly to the 5'-end of the 23S rRNA, where it nucleates assembly of the 50S subunit. Its function is as follows. One of the proteins that surrounds the polypeptide exit tunnel on the outside of the subunit. This Actinobacillus succinogenes (strain ATCC 55618 / DSM 22257 / CCUG 43843 / 130Z) protein is Large ribosomal subunit protein uL24.